A 339-amino-acid chain; its full sequence is Exopolyphosphatase 1 (339 aa).

The disordered stretch occupies residues 315–339; it reads QTSVRDTRGQEVDRNAANRSRGDKT. A compositionally biased stretch (basic and acidic residues) spans 319–339; the sequence is RDTRGQEVDRNAANRSRGDKT.

Belongs to the GppA/Ppx family. Homodimer.

It carries out the reaction [phosphate](n) + H2O = [phosphate](n-1) + phosphate + H(+). In terms of biological role, degradation of inorganic polyphosphates (polyP). Releases orthophosphate processively from the ends of the polyP chain. The protein is Exopolyphosphatase 1 of Mycobacterium leprae (strain TN).